A 475-amino-acid chain; its full sequence is UDP-N-acetylmuramate--L-alanine ligase (475 aa).

An ATP-binding site is contributed by 125-131 (GTHGKTS).

Belongs to the MurCDEF family.

It is found in the cytoplasm. The enzyme catalyses UDP-N-acetyl-alpha-D-muramate + L-alanine + ATP = UDP-N-acetyl-alpha-D-muramoyl-L-alanine + ADP + phosphate + H(+). The protein operates within cell wall biogenesis; peptidoglycan biosynthesis. Cell wall formation. This Mycolicibacterium gilvum (strain PYR-GCK) (Mycobacterium gilvum (strain PYR-GCK)) protein is UDP-N-acetylmuramate--L-alanine ligase.